The chain runs to 229 residues: Protein 33K (229 aa).

The disordered stretch occupies residues 1–157; it reads MAPKKKLQLP…GALRLAPNEP (157 aa). The span at 14–54 shows a compositional bias: acidic residues; the sequence is TDEEEYWDSQAEEVLDEEEEDMMEDWESLDEEASEVEEVSD. Composition is skewed to low complexity over residues 55-64, 71-82, and 100-122; these read ETPSPSVAFP, SATGSSMATTSA, and TTGT…AAAT. The interval 172 to 199 is necessary for nuclear subcellular location; sequence YAIFQQSRGQEQELKIKNRSLRSLTRSC. The tract at residues 178-198 is RS-repeat; required for splicing enhancer activity; that stretch reads SRGQEQELKIKNRSLRSLTRS.

It belongs to the adenoviridae splicing factor family. Homooligomer. Interacts with DBP; this interaction occurs at a unique vertex during genome packaging. Interacts with IVa2; this interaction occurs at a unique vertex during genome packaging and seems to potentiate IVa2 and 33K oligomerization. Phosphorylated in vitro by human PKA and PRKDC. PRKDC inhibits, whereas PKA activates the splicing factor.

The protein localises to the host nucleus. Promotes alternative splicing of late transcripts by promoting splicing at weak 3' splice sites. Required for the temporal activation of major late pre-mRNA splicing at late times of infection. Induces the splicing and expression of the late capsid vertex protein. Its function is as follows. Probably functions as the small terminase that is part of the molecular motor that translocates genomic DNA in empty capsid during DNA packaging. This motor is located at a unique vertex and comprises at least the IVa2 ATPase, the small terminase 33K and probably a portal. Forms a ring-like structure of about 17 nm in which genomic DNA is translocated into the capsid. Stimulates IVa2 ATPase activity in the presence of the viral genome. Once the DNA is packaged, the terminase detaches: the 33K protein is present in the empty particles, but not in the mature virions. Also involved in virion assembly. This chain is Protein 33K, found in Homo sapiens (Human).